Here is a 342-residue protein sequence, read N- to C-terminus: N-acetyl-gamma-glutamyl-phosphate reductase (342 aa).

Cys149 is an active-site residue.

It belongs to the NAGSA dehydrogenase family. Type 1 subfamily.

It is found in the cytoplasm. The enzyme catalyses N-acetyl-L-glutamate 5-semialdehyde + phosphate + NADP(+) = N-acetyl-L-glutamyl 5-phosphate + NADPH + H(+). It functions in the pathway amino-acid biosynthesis; L-arginine biosynthesis; N(2)-acetyl-L-ornithine from L-glutamate: step 3/4. Functionally, catalyzes the NADPH-dependent reduction of N-acetyl-5-glutamyl phosphate to yield N-acetyl-L-glutamate 5-semialdehyde. The chain is N-acetyl-gamma-glutamyl-phosphate reductase from Aromatoleum aromaticum (strain DSM 19018 / LMG 30748 / EbN1) (Azoarcus sp. (strain EbN1)).